The primary structure comprises 189 residues: Elongation factor P (189 aa).

It belongs to the elongation factor P family.

It is found in the cytoplasm. The protein operates within protein biosynthesis; polypeptide chain elongation. Involved in peptide bond synthesis. Stimulates efficient translation and peptide-bond synthesis on native or reconstituted 70S ribosomes in vitro. Probably functions indirectly by altering the affinity of the ribosome for aminoacyl-tRNA, thus increasing their reactivity as acceptors for peptidyl transferase. This Aster yellows witches'-broom phytoplasma (strain AYWB) protein is Elongation factor P.